The primary structure comprises 610 residues: Sulfite reductase [NADPH] flavoprotein alpha-component (610 aa).

The 139-residue stretch at 68–206 folds into the Flavodoxin-like domain; the sequence is IIVISASQTG…EVDKWKEKVV (139 aa). Residues 74-79, 121-124, and 157-166 contribute to the FMN site; these read SQTGNA, STHG, and LGDRSYEYFA. The 217-residue stretch at 243–459 folds into the FAD-binding FR-type domain; sequence EFPLIAYLLN…VESNDNFRLP (217 aa). FAD-binding positions include threonine 331, serine 365, 397–400, 415–417, tyrosine 421, and 430–433; these read RFYS, TVS, and GGAS. Residues 530–531, 536–540, and aspartate 572 contribute to the NADP(+) site; these read SR and KVYVQ. FAD is bound at residue tyrosine 610.

The protein belongs to the NADPH-dependent sulphite reductase flavoprotein subunit CysJ family. In the N-terminal section; belongs to the flavodoxin family. It in the C-terminal section; belongs to the flavoprotein pyridine nucleotide cytochrome reductase family. Alpha(8)-beta(8). The alpha component is a flavoprotein, the beta component is a hemoprotein. FAD is required as a cofactor. It depends on FMN as a cofactor.

The catalysed reaction is hydrogen sulfide + 3 NADP(+) + 3 H2O = sulfite + 3 NADPH + 4 H(+). It participates in sulfur metabolism; hydrogen sulfide biosynthesis; hydrogen sulfide from sulfite (NADPH route): step 1/1. Functionally, component of the sulfite reductase complex that catalyzes the 6-electron reduction of sulfite to sulfide. This is one of several activities required for the biosynthesis of L-cysteine from sulfate. The flavoprotein component catalyzes the electron flow from NADPH -&gt; FAD -&gt; FMN to the hemoprotein component. The sequence is that of Sulfite reductase [NADPH] flavoprotein alpha-component from Blochmanniella floridana.